The primary structure comprises 736 residues: Peroxisomal multifunctional enzyme type 2 (736 aa).

The segment at 1–305 is (3R)-hydroxyacyl-CoA dehydrogenase; that stretch reads MGSPLRFDGR…IEVLSKIDSE (305 aa). NAD(+)-binding positions include 13 to 37, L21, and D40; that span reads LVTG…ALVV. K46 carries the N6-acetyllysine; alternate modification. K46 carries the post-translational modification N6-succinyllysine; alternate. Residue S52 is modified to Phosphoserine. 2 positions are modified to N6-succinyllysine: K57 and K68. 75-76 contacts NAD(+); the sequence is SV. K84 is subject to N6-succinyllysine. Residue N99 coordinates NAD(+). Residue S151 coordinates substrate. The active-site Proton acceptor is Y164. Residues 164-168 and 196-199 each bind NAD(+); these read YSAAK and AGSR. Position 265 is a phosphothreonine (T265). N6-succinyllysine is present on K275. Residues S304 and S309 each carry the phosphoserine modification. An enoyl-CoA hydratase 2 region spans residues 322–622; the sequence is SGFAGAIGQK…AKTPSEGGKL (301 aa). K356 carries the N6-succinyllysine modification. 406–407 contacts (3R)-3-hydroxydecanoyl-CoA; the sequence is HG. N6-succinyllysine is present on K424. Residues K435, 510 to 515, G533, and F563 each bind (3R)-3-hydroxydecanoyl-CoA; that span reads DWNPLH. The MaoC-like domain maps to 484 to 600; the sequence is IPNRPPDAVL…QETGDIVISN (117 aa). At K565 the chain carries N6-acetyllysine. N6-succinyllysine occurs at positions 579 and 663. The SCP2 domain maps to 624-736; sequence STFVFEEIGR…QMILKDYAKL (113 aa). K669 carries the post-translational modification N6-acetyllysine. Q706 contributes to the substrate binding site. An N6-acetyllysine modification is found at K707. Q724 serves as a coordination point for substrate. Residue K725 is modified to N6-succinyllysine. Positions 734-736 match the Microbody targeting signal motif; that stretch reads AKL.

Belongs to the short-chain dehydrogenases/reductases (SDR) family. As to quaternary structure, homodimer. Present in many tissues with highest concentrations in liver, heart, prostate and testis.

Its subcellular location is the peroxisome. It catalyses the reaction a (3R)-3-hydroxyacyl-CoA + NAD(+) = a 3-oxoacyl-CoA + NADH + H(+). It carries out the reaction a (3R)-3-hydroxyacyl-CoA = a (2E)-enoyl-CoA + H2O. The catalysed reaction is (24R,25R)-3alpha,7alpha,12alpha,24-tetrahydroxy-5beta-cholestan-26-oyl-CoA = (24E)-3alpha,7alpha,12alpha-trihydroxy-5beta-cholest-24-en-26-oyl-CoA + H2O. The enzyme catalyses (2E)-octenoyl-CoA + H2O = (3R)-hydroxyoctanoyl-CoA. It catalyses the reaction (3R)-hydroxyoctanoyl-CoA + NAD(+) = 3-oxooctanoyl-CoA + NADH + H(+). It carries out the reaction (3R)-hydroxyhexadecanoyl-CoA + NAD(+) = 3-oxohexadecanoyl-CoA + NADH + H(+). The catalysed reaction is (2E)-hexadecenedioyl-CoA + H2O = (3R)-hydroxyhexadecanedioyl-CoA. The enzyme catalyses (3R)-hydroxyhexadecanedioyl-CoA + NAD(+) = 3-oxohexadecanedioyl-CoA + NADH + H(+). It catalyses the reaction (3R)-hydroxyhexadecanoyl-CoA = (2E)-hexadecenoyl-CoA + H2O. It carries out the reaction (3R)-3-hydroxydecanoyl-CoA = (2E)-decenoyl-CoA + H2O. The catalysed reaction is (3R)-3-hydroxydecanoyl-CoA + NAD(+) = 3-oxodecanoyl-CoA + NADH + H(+). The enzyme catalyses (24R,25R)-3alpha,7alpha,12alpha,24-tetrahydroxy-5beta-cholestan-26-oyl-CoA + NAD(+) = 3alpha,7alpha,12alpha-trihydroxy-24-oxo-5beta-cholestan-26-oyl-CoA + NADH + H(+). The protein operates within lipid metabolism; fatty acid beta-oxidation. Bifunctional enzyme acting on the peroxisomal fatty acid beta-oxidation pathway. Catalyzes two of the four reactions in fatty acid degradation: hydration of 2-enoyl-CoA (trans-2-enoyl-CoA) to produce (3R)-3-hydroxyacyl-CoA, and dehydrogenation of (3R)-3-hydroxyacyl-CoA to produce 3-ketoacyl-CoA (3-oxoacyl-CoA), which is further metabolized by SCPx. Can use straight-chain and branched-chain fatty acids, as well as bile acid intermediates as substrates. In Homo sapiens (Human), this protein is Peroxisomal multifunctional enzyme type 2.